The following is a 66-amino-acid chain: Large ribosomal subunit protein bL33c (66 aa).

It belongs to the bacterial ribosomal protein bL33 family.

The protein resides in the plastid. The protein localises to the chloroplast. This chain is Large ribosomal subunit protein bL33c, found in Lepidium virginicum (Virginia pepperweed).